A 246-amino-acid chain; its full sequence is Eukaryotic translation initiation factor 6 (246 aa).

Phosphoserine; by CK1 occurs at positions 174 and 175.

Belongs to the eIF-6 family. As to quaternary structure, monomer. Associates with the 60S ribosomal subunit. Post-translationally, phosphorylation at Ser-174 and Ser-175 promotes nuclear export.

The protein resides in the cytoplasm. It is found in the nucleus. The protein localises to the nucleolus. Its function is as follows. Binds to the 60S ribosomal subunit and prevents its association with the 40S ribosomal subunit to form the 80S initiation complex in the cytoplasm. Is also involved in ribosome biogenesis. Associates with pre-60S subunits in the nucleus and is involved in its nuclear export. This is Eukaryotic translation initiation factor 6 from Verticillium alfalfae (strain VaMs.102 / ATCC MYA-4576 / FGSC 10136) (Verticillium wilt of alfalfa).